The chain runs to 308 residues: Glycerol-3-phosphate dehydrogenase [NAD(P)+] (308 aa).

Positions 13, 33, and 81 each coordinate NADPH. Residues lysine 81 and glycine 109 each contribute to the sn-glycerol 3-phosphate site. Position 113 (alanine 113) interacts with NADPH. Positions 163, 216, 226, 227, and 228 each coordinate sn-glycerol 3-phosphate. Lysine 163 serves as the catalytic Proton acceptor. Arginine 227 provides a ligand contact to NADPH. Glutamate 253 contacts NADPH.

This sequence belongs to the NAD-dependent glycerol-3-phosphate dehydrogenase family.

It is found in the cytoplasm. It carries out the reaction sn-glycerol 3-phosphate + NAD(+) = dihydroxyacetone phosphate + NADH + H(+). It catalyses the reaction sn-glycerol 3-phosphate + NADP(+) = dihydroxyacetone phosphate + NADPH + H(+). Its pathway is membrane lipid metabolism; glycerophospholipid metabolism. Catalyzes the reduction of the glycolytic intermediate dihydroxyacetone phosphate (DHAP) to sn-glycerol 3-phosphate (G3P), the key precursor for phospholipid synthesis. The protein is Glycerol-3-phosphate dehydrogenase [NAD(P)+] of Thermosynechococcus vestitus (strain NIES-2133 / IAM M-273 / BP-1).